Here is a 583-residue protein sequence, read N- to C-terminus: MSIWKEAKDASGRIYYYNTLTKKSTWEKPKELISQEELLLRENGWKAAKTADGKVYYYNPTTRETSWTIPAFEKKVEPIAEQKHDTVSHAQVNGNRIALTAGEKQEPGRTINEEESQYANNSKLLNVRRRTKEEAEKEFITMLKENQVDSTWSFSRIISELGTRDPRYWMVDDDPLWKKEMFEKYLSNRSADQLLKEHNETSKFKEAFQKMLQNNSHIKYYTRWPTAKRLIADEPIYKHSVVNEKTKRQTFQDYIDTLIDTQKESKKKLKTQALKELREYLNGIITTSSSETFITWQQLLNHYVFDKSKRYMANRHFKVLTHEDVLNEYLKIVNTIENDLQNKLNELRLRNYTRDRIARDNFKSLLREVPIKIKANTRWSDIYPHIKSDPRFLHMLGRNGSSCLDLFLDFVDEQRMYIFAQRSIAQQTLIDQNFEWNDADSDEITKQNIEKVLENDRKFDKVDKEDISLIVDGLIKQRNEKIQQKLQNERRILEQKKHYFWLLLQRTYTKTGKPKPSTWDLASKELGESLEYKALGDEDNIRRQIFEDFKPESSAPTAESATANLTLTASKKRHLTPAVELDY.

WW domains are found at residues 1–31 (MSIW…KPKE) and 42–72 (ENGW…IPAF). FF domains follow at residues 132–188 (KEEA…YLSN), 201–257 (TSKF…YIDT), 262–332 (QKES…YLKI), 354–413 (RDRI…FVDE), 427–488 (QTLI…KLQN), and 491–552 (RILE…FKPE). Residue T576 is modified to Phosphothreonine.

Belongs to the PRPF40 family. As to quaternary structure, interacts with CRM1, MSL5, PRP8, and the RNA polymerase II largest subunit (RPB1). MSL5, MUD2 and PRP40 interact to form the commitment complex 2 (CC2), a precursor of mature spliceosomes.

Its subcellular location is the nucleus. Required for pre-spliceosome formation, which is the first step of pre-mRNA splicing. This protein is associated with snRNP U1. Two commitment complexes, CC1 and CC2, have been defined in yeast. CC1 is a basal complex dependent only on the 5' splice site. CC2 is a complex of lower mobility and is dependent on a branchpoint as well as a 5' splice site region. This protein is involved in CC2 formation where it binds to the branchpoint binding protein MSL5, bridging the U1 snRNP-associated 5' splice site and the MSL5-associated branch point 3' intron splice site. In Saccharomyces cerevisiae (strain ATCC 204508 / S288c) (Baker's yeast), this protein is Pre-mRNA-processing protein PRP40 (PRP40).